A 631-amino-acid polypeptide reads, in one-letter code: Glutathione S-transferase C-terminal domain-containing protein (631 aa).

The GST C-terminal domain occupies 128-330 (LGFKKTCLKA…QEVPRVQTAA (203 aa)). 2 disordered regions span residues 188 to 233 (HNDD…SSSA) and 345 to 373 (TTSSQQPPNLDEAPSAEEQNDPSFIGGPR). The span at 211–224 (AKEKTKSKGHRQET) shows a compositional bias: basic and acidic residues. S231 carries the phosphoserine modification.

The protein belongs to the GSTCD family.

The protein localises to the cytoplasm. This Bos taurus (Bovine) protein is Glutathione S-transferase C-terminal domain-containing protein (GSTCD).